Reading from the N-terminus, the 202-residue chain is Matrix protein (202 aa).

A PPXY motif motif is present at residues 35–38; that stretch reads PPEY. Positions 115–151 are essential for glycoprotein binding; it reads KLRRTLIFQWADSRGPLEGEELEYSQEITWDDNTEFV.

It belongs to the lyssavirus matrix protein family. In terms of assembly, homomultimer. Interacts with nucleoprotein and with the cytoplasmic domain of glycoprotein. Interacts with host ATP6V1A; this interaction plays an important role in virion uncoating after viral entry.

The protein localises to the virion membrane. Its subcellular location is the host endomembrane system. It is found in the host cytoplasm. In terms of biological role, plays a major role in assembly, budding and uncoating of virion after membrane fusion. Completely covers the ribonucleoprotein coil and keep it in condensed bullet-shaped form. Inhibits viral transcription and stimulates replication. Plays a major role in early induction of TRAIL-mediated apoptosis in infected neurons. Inhibits the integrated stress response (ISR) in the infected cell by blocking the formation of stress granules. The sequence is that of Matrix protein (M) from Homo sapiens (Human).